Reading from the N-terminus, the 296-residue chain is Small ribosomal subunit biogenesis GTPase RsgA (296 aa).

In terms of domain architecture, CP-type G spans 63 to 224; it reads KNQLVRPMVA…IADTPGFSSY (162 aa). GTP contacts are provided by residues 112–115 and 167–175; these read SKTD and GQTGAGKST. Zn(2+)-binding residues include Cys248, Cys253, His255, and Cys261.

It belongs to the TRAFAC class YlqF/YawG GTPase family. RsgA subfamily. Monomer. Associates with 30S ribosomal subunit, binds 16S rRNA. Requires Zn(2+) as cofactor.

The protein resides in the cytoplasm. Functionally, one of several proteins that assist in the late maturation steps of the functional core of the 30S ribosomal subunit. Helps release RbfA from mature subunits. May play a role in the assembly of ribosomal proteins into the subunit. Circularly permuted GTPase that catalyzes slow GTP hydrolysis, GTPase activity is stimulated by the 30S ribosomal subunit. The protein is Small ribosomal subunit biogenesis GTPase RsgA of Limosilactobacillus fermentum (strain NBRC 3956 / LMG 18251) (Lactobacillus fermentum).